Reading from the N-terminus, the 348-residue chain is Phosphoribosylformylglycinamidine cyclo-ligase (348 aa).

Belongs to the AIR synthase family.

The protein localises to the cytoplasm. It carries out the reaction 2-formamido-N(1)-(5-O-phospho-beta-D-ribosyl)acetamidine + ATP = 5-amino-1-(5-phospho-beta-D-ribosyl)imidazole + ADP + phosphate + H(+). It participates in purine metabolism; IMP biosynthesis via de novo pathway; 5-amino-1-(5-phospho-D-ribosyl)imidazole from N(2)-formyl-N(1)-(5-phospho-D-ribosyl)glycinamide: step 2/2. The chain is Phosphoribosylformylglycinamidine cyclo-ligase from Cereibacter sphaeroides (strain ATCC 17025 / ATH 2.4.3) (Rhodobacter sphaeroides).